We begin with the raw amino-acid sequence, 338 residues long: Ribosomal RNA small subunit methyltransferase C (338 aa).

It belongs to the methyltransferase superfamily. RsmC family. In terms of assembly, monomer.

It is found in the cytoplasm. It carries out the reaction guanosine(1207) in 16S rRNA + S-adenosyl-L-methionine = N(2)-methylguanosine(1207) in 16S rRNA + S-adenosyl-L-homocysteine + H(+). Its function is as follows. Specifically methylates the guanine in position 1207 of 16S rRNA in the 30S particle. The chain is Ribosomal RNA small subunit methyltransferase C from Photorhabdus laumondii subsp. laumondii (strain DSM 15139 / CIP 105565 / TT01) (Photorhabdus luminescens subsp. laumondii).